We begin with the raw amino-acid sequence, 150 residues long: Anthranilate synthase component 1 (150 aa).

Serine 40 lines the L-tryptophan pocket. Arginine 119 contributes to the chorismate binding site.

It belongs to the anthranilate synthase component I family. Heterotetramer consisting of two non-identical subunits: a beta subunit (TrpG) and a large alpha subunit (TrpE). Requires Mg(2+) as cofactor.

It catalyses the reaction chorismate + L-glutamine = anthranilate + pyruvate + L-glutamate + H(+). It functions in the pathway amino-acid biosynthesis; L-tryptophan biosynthesis; L-tryptophan from chorismate: step 1/5. With respect to regulation, feedback inhibited by tryptophan. Its function is as follows. Part of a heterotetrameric complex that catalyzes the two-step biosynthesis of anthranilate, an intermediate in the biosynthesis of L-tryptophan. In the first step, the glutamine-binding beta subunit (TrpG) of anthranilate synthase (AS) provides the glutamine amidotransferase activity which generates ammonia as a substrate that, along with chorismate, is used in the second step, catalyzed by the large alpha subunit of AS (TrpE) to produce anthranilate. In the absence of TrpG, TrpE can synthesize anthranilate directly from chorismate and high concentrations of ammonia. The sequence is that of Anthranilate synthase component 1 (trpE) from Citrobacter freundii.